Reading from the N-terminus, the 353-residue chain is tRNA N6-adenosine threonylcarbamoyltransferase (353 aa).

2 residues coordinate Fe cation: His115 and His119. Residues 138–142 (LVSGG), Asp171, Gly184, and Asn276 each bind substrate. Fe cation is bound at residue Asp304.

The protein belongs to the KAE1 / TsaD family. Fe(2+) serves as cofactor.

It is found in the cytoplasm. The catalysed reaction is L-threonylcarbamoyladenylate + adenosine(37) in tRNA = N(6)-L-threonylcarbamoyladenosine(37) in tRNA + AMP + H(+). In terms of biological role, required for the formation of a threonylcarbamoyl group on adenosine at position 37 (t(6)A37) in tRNAs that read codons beginning with adenine. Is involved in the transfer of the threonylcarbamoyl moiety of threonylcarbamoyl-AMP (TC-AMP) to the N6 group of A37, together with TsaE and TsaB. TsaD likely plays a direct catalytic role in this reaction. The chain is tRNA N6-adenosine threonylcarbamoyltransferase from Xanthomonas euvesicatoria pv. vesicatoria (strain 85-10) (Xanthomonas campestris pv. vesicatoria).